Reading from the N-terminus, the 245-residue chain is MNKNIKYSQNFLTSEKVLNQIIKQLNLKETDTVYEIGTGKGHLTTKLAKISKQVTSIELDSHLFNLSSEKLKLNTRVTLIHQDILQFQFPNKQRYKIVGSIPYHLSTQIIKKVVFESHASDIYLIVEEGFYKRTLDIHRTLGLLLHTQVSIQQLLKLPAECFHPKPKVNSVLIKLTRHTTDVPDKYWKLYTYFVSKWVNREYRQLFTKNQFHQAMKHAKVNNLSTVTYEQVLSIFNSYLLFNGRK.

6 residues coordinate S-adenosyl-L-methionine: asparagine 10, leucine 12, glycine 37, glutamate 58, aspartate 83, and serine 100.

The protein belongs to the class I-like SAM-binding methyltransferase superfamily. rRNA adenine N(6)-methyltransferase family.

The catalysed reaction is adenosine(2085) in 23S rRNA + 2 S-adenosyl-L-methionine = N(6)-dimethyladenosine(2085) in 23S rRNA + 2 S-adenosyl-L-homocysteine + 2 H(+). In terms of biological role, this protein produces a dimethylation of the adenine residue at position 2085 in 23S rRNA, resulting in reduced affinity between ribosomes and macrolide-lincosamide-streptogramin B antibiotics. This Clostridium perfringens protein is rRNA adenine N-6-methyltransferase (ermBP).